Reading from the N-terminus, the 280-residue chain is Large ribosomal subunit protein uL2 (280 aa).

The interval 213 to 280 is disordered; it reads RWKGKRPSVR…RRRTGKKHAR (68 aa). Over residues 268-280 the composition is skewed to basic residues; sequence IVRRRRTGKKHAR.

This sequence belongs to the universal ribosomal protein uL2 family. In terms of assembly, part of the 50S ribosomal subunit. Forms a bridge to the 30S subunit in the 70S ribosome.

Its function is as follows. One of the primary rRNA binding proteins. Required for association of the 30S and 50S subunits to form the 70S ribosome, for tRNA binding and peptide bond formation. It has been suggested to have peptidyltransferase activity; this is somewhat controversial. Makes several contacts with the 16S rRNA in the 70S ribosome. This chain is Large ribosomal subunit protein uL2, found in Mycobacterium leprae (strain Br4923).